We begin with the raw amino-acid sequence, 84 residues long: Small ribosomal subunit protein bS20 (84 aa).

It belongs to the bacterial ribosomal protein bS20 family.

Binds directly to 16S ribosomal RNA. The sequence is that of Small ribosomal subunit protein bS20 from Levilactobacillus brevis (strain ATCC 367 / BCRC 12310 / CIP 105137 / JCM 1170 / LMG 11437 / NCIMB 947 / NCTC 947) (Lactobacillus brevis).